A 101-amino-acid polypeptide reads, in one-letter code: Small ribosomal subunit protein uS14 (101 aa).

The protein belongs to the universal ribosomal protein uS14 family. Part of the 30S ribosomal subunit. Contacts proteins S3 and S10.

Its function is as follows. Binds 16S rRNA, required for the assembly of 30S particles and may also be responsible for determining the conformation of the 16S rRNA at the A site. This chain is Small ribosomal subunit protein uS14, found in Neisseria gonorrhoeae (strain ATCC 700825 / FA 1090).